The chain runs to 103 residues: Urease subunit beta (103 aa).

Belongs to the urease beta subunit family. As to quaternary structure, heterotrimer of UreA (gamma), UreB (beta) and UreC (alpha) subunits. Three heterotrimers associate to form the active enzyme.

It is found in the cytoplasm. It catalyses the reaction urea + 2 H2O + H(+) = hydrogencarbonate + 2 NH4(+). It participates in nitrogen metabolism; urea degradation; CO(2) and NH(3) from urea (urease route): step 1/1. This is Urease subunit beta from Blochmanniella floridana.